The sequence spans 517 residues: Putative ribose/galactose/methyl galactoside import ATP-binding protein 1 (517 aa).

2 ABC transporter domains span residues 23–258 (LQLQ…VGRP) and 269–515 (TPTD…SGRS). 55 to 62 (GENGAGKS) serves as a coordination point for ATP.

This sequence belongs to the ABC transporter superfamily. Carbohydrate importer 2 (CUT2) (TC 3.A.1.2) family.

It localises to the cell inner membrane. It carries out the reaction D-ribose(out) + ATP + H2O = D-ribose(in) + ADP + phosphate + H(+). The catalysed reaction is D-galactose(out) + ATP + H2O = D-galactose(in) + ADP + phosphate + H(+). Functionally, part of an ABC transporter complex involved in carbohydrate import. Could be involved in ribose, galactose and/or methyl galactoside import. Responsible for energy coupling to the transport system. This is Putative ribose/galactose/methyl galactoside import ATP-binding protein 1 from Burkholderia ambifaria (strain ATCC BAA-244 / DSM 16087 / CCUG 44356 / LMG 19182 / AMMD) (Burkholderia cepacia (strain AMMD)).